Reading from the N-terminus, the 179-residue chain is Transcriptional repressor NrdR (179 aa).

A zinc finger spans residues 3–34; it reads CPYCQHTNSRVLESRSSEGGQSIRRRRECLCC. The ATP-cone domain occupies 49 to 139; that stretch reads ITVIKHDGKK…VYGRFQGIKD (91 aa). Residues 160–179 are disordered; that stretch reads KPANDDFSEQETPSTVMMPS. Polar residues predominate over residues 169–179; it reads QETPSTVMMPS.

This sequence belongs to the NrdR family. Zn(2+) serves as cofactor.

In terms of biological role, negatively regulates transcription of bacterial ribonucleotide reductase nrd genes and operons by binding to NrdR-boxes. This is Transcriptional repressor NrdR from Rippkaea orientalis (strain PCC 8801 / RF-1) (Cyanothece sp. (strain PCC 8801)).